The following is a 1113-amino-acid chain: Protein KIBRA (1113 aa).

WW domains are found at residues 6 to 39 (LPLPEGWEEARDFDGKVYYIDHTNRTTSWIDPRD) and 53 to 86 (DELPLGWEEAYDPQVGDYFIDHNTKTTQIEDPRV). Coiled-coil stretches lie at residues 107 to 193 (LSAQ…RGFQ) and 293 to 431 (NSNN…SSMQ). At Ser-141 the chain carries Phosphoserine. 2 disordered regions span residues 429 to 448 (SMQSLSSGSSPGSLTSSRGS) and 522 to 547 (RSLSGTPKSMTSLSPRSSLSSPSPPC). A compositionally biased stretch (polar residues) spans 522–532 (RSLSGTPKSMT). Over residues 533-542 (SLSPRSSLSS) the composition is skewed to low complexity. Ser-535 is subject to Phosphoserine. Position 542 is a phosphoserine; by CDK1 (Ser-542). One can recognise a C2 domain in the interval 658–781 (GATRIQIALK…RSGERSTRWY (124 aa)). The interval 825-975 (LEKRQEGRSS…RSVRMKRPSS (151 aa)) is disordered. The interaction with histone H3 stretch occupies residues 839–1113 (EDSWRYEETS…NIPALSADDV (275 aa)). Acidic residues predominate over residues 847-870 (TSENEAVAEEEEEEVEEEEGEEDV). Ser-899 is modified (phosphoserine). A Phosphothreonine modification is found at Thr-912. Residues 924–938 (IIRSKTFSPGPQSQY) show a composition bias toward polar residues. At Ser-927 the chain carries Phosphoserine. The residue at position 929 (Thr-929) is a Phosphothreonine. Ser-931 carries the phosphoserine; by CDK1 modification. Position 947 is a phosphoserine (Ser-947). Interaction with PRKCZ regions lie at residues 953 to 996 (SKKP…LDLQ) and 956 to 975 (PPFVRNSLERRSVRMKRPSS). 2 positions are modified to phosphoserine; by PKC/PRKCZ: Ser-975 and Ser-978. A coiled-coil region spans residues 1001–1032 (WHSQLTQEISVLKELKEQLEQAKSHGEKELPQ). The short motif at 1111–1113 (DDV) is the ADDV motif element.

It belongs to the WWC family. KIBRA subfamily. As to quaternary structure, homodimer. Forms heterodimers with WWC2 and WWC3. Interacts with DDN. Interacts with DYNLL1 and histone H3. The interaction with DYNLL1 is mandatory for the recruitment and transactivation functions of ESR1 or DYNLL1 to the target chromatin and the interaction with histone H3 ensures proper regulatory interaction of WWC1-DYNLL1-ESR1 complexes with target chromatin. Interacts (via WW domains) with DDR1 (via PPxY motif) in a collagen-regulated manner. Interacts with PRKCZ (via the protein kinase domain). Forms a tripartite complex with DDR1 and PRKCZ, but predominantly in the absence of collagen. Interacts (via the ADDV motif) with PATJ (via PDZ domain 8). Interacts (via WW domains) with SYNPO (via PPxY motifs). Interacts with NF2 and SNX4. Interacts with DLC1 and PRKCZ. Interacts (via WW domains) with LATS1 and LATS2. In terms of processing, phosphorylation at Ser-542 and Ser-931 by CDK1 in response to spindle damage stress regulates mitotic exit, these two sites are dephosphorylated by CDC14B. As to expression, expressed in mammary epithelial cells and breast cancer cell lines. Found in the luminal epithelium surrounding the ducts in the normal breast. In the brain, expressed in somatodendritic compartment of neurons in the cortex and hippocampus and in the cerebellum it is found in the Purkinje cells and some granule cells (at protein level). Detected in brain, heart, colon and kidney. In the kidney, expressed in glomerular podocytes, in some tubules and in the collecting duct.

The protein resides in the cytoplasm. The protein localises to the perinuclear region. It is found in the nucleus. It localises to the cell projection. Its subcellular location is the ruffle membrane. The protein resides in the cytosol. Functionally, regulator of the Hippo signaling pathway, also known as the Salvador-Warts-Hippo (SWH) pathway. Enhances phosphorylation of LATS1 and YAP1 and negatively regulates cell proliferation and organ growth due to a suppression of the transcriptional activity of YAP1, the major effector of the Hippo pathway. Along with NF2 can synergistically induce the phosphorylation of LATS1 and LATS2 and function in the regulation of Hippo signaling pathway. Acts as a transcriptional coactivator of ESR1 which plays an essential role in DYNLL1-mediated ESR1 transactivation. Regulates collagen-stimulated activation of the ERK/MAPK cascade. Modulates directional migration of podocytes. Plays a role in cognition and memory performance. Plays an important role in regulating AMPA-selective glutamate receptors (AMPARs) trafficking underlying synaptic plasticity and learning. The polypeptide is Protein KIBRA (Homo sapiens (Human)).